The chain runs to 271 residues: Mannosyl-3-phosphoglycerate phosphatase (271 aa).

Catalysis depends on aspartate 13, which acts as the Nucleophile. Mg(2+)-binding residues include aspartate 13, aspartate 15, and aspartate 214.

The protein belongs to the HAD-like hydrolase superfamily. MPGP family. It depends on Mg(2+) as a cofactor.

Its subcellular location is the cytoplasm. The enzyme catalyses 2-O-(alpha-D-mannosyl)-3-phosphoglycerate + H2O = (2R)-2-O-(alpha-D-mannosyl)-glycerate + phosphate. The polypeptide is Mannosyl-3-phosphoglycerate phosphatase (yedP) (Shigella dysenteriae serotype 1 (strain Sd197)).